Here is a 516-residue protein sequence, read N- to C-terminus: D-aminopeptidase (516 aa).

Ser-61 acts as the Nucleophile in catalysis. Lys-64 serves as the catalytic Proton donor/acceptor. Positions 476–486 are important for specificity; it reads RRSMDAPAPGD. Residue Asp-480 participates in substrate binding.

It belongs to the peptidase S12 family. In terms of assembly, homodimer.

It catalyses the reaction Release of an N-terminal D-amino acid from a peptide, Xaa-|-Yaa-, in which Xaa is preferably D-Ala, D-Ser or D-Thr. D-amino acid amides and methyl esters also are hydrolyzed, as is glycine amide.. With respect to regulation, inhibited by beta-lactam compounds such as 6-aminopenicillic acid, 7-aminocephalosporanic acid, benzylpenicillin and ampicillin. Inhibited by p-chloromercuribenzoate. Hydrolyzes N-terminal residues in D-amino acid-containing peptides. The sequence is that of D-aminopeptidase from Cereibacter sphaeroides (strain ATCC 17023 / DSM 158 / JCM 6121 / CCUG 31486 / LMG 2827 / NBRC 12203 / NCIMB 8253 / ATH 2.4.1.) (Rhodobacter sphaeroides).